The chain runs to 79 residues: Acyl carrier protein (79 aa).

In terms of domain architecture, Carrier spans 4–79; it reads AEIKDKVYDI…QAIDYIVNKK (76 aa). Ser39 carries the O-(pantetheine 4'-phosphoryl)serine modification.

The protein belongs to the acyl carrier protein (ACP) family. Post-translationally, 4'-phosphopantetheine is transferred from CoA to a specific serine of apo-ACP by AcpS. This modification is essential for activity because fatty acids are bound in thioester linkage to the sulfhydryl of the prosthetic group.

The protein resides in the cytoplasm. Its pathway is lipid metabolism; fatty acid biosynthesis. Its function is as follows. Carrier of the growing fatty acid chain in fatty acid biosynthesis. The chain is Acyl carrier protein from Chlorobaculum parvum (strain DSM 263 / NCIMB 8327) (Chlorobium vibrioforme subsp. thiosulfatophilum).